The chain runs to 195 residues: Cytochrome c biogenesis ATP-binding export protein CcmA (195 aa).

One can recognise an ABC transporter domain in the interval 1 to 195; that stretch reads MLSLHQLQFN…IKSAQILQLV (195 aa). 33–40 serves as a coordination point for ATP; that stretch reads GANGSGKS.

It belongs to the ABC transporter superfamily. CcmA exporter (TC 3.A.1.107) family. As to quaternary structure, the complex is composed of two ATP-binding proteins (CcmA) and two transmembrane proteins (CcmB).

The protein resides in the cell inner membrane. It catalyses the reaction heme b(in) + ATP + H2O = heme b(out) + ADP + phosphate + H(+). Part of the ABC transporter complex CcmAB involved in the biogenesis of c-type cytochromes; once thought to export heme, this seems not to be the case, but its exact role is uncertain. Responsible for energy coupling to the transport system. The polypeptide is Cytochrome c biogenesis ATP-binding export protein CcmA (Rickettsia felis (strain ATCC VR-1525 / URRWXCal2) (Rickettsia azadi)).